The following is a 98-amino-acid chain: Lipolysis-activating peptide 1-beta chain (98 aa).

The first 22 residues, 1–22 (MANVQVIFVAYIAVIAFSMVYG), serve as a signal peptide directing secretion. Residues 23-91 (DDYKPFGEHN…FLKAMEKQCP (69 aa)) enclose the LCN-type CS-alpha/beta domain. Cystine bridges form between Cys-37-Cys-60, Cys-45-Cys-70, and Cys-49-Cys-72.

The protein belongs to the long (3 C-C) scorpion toxin superfamily. Homodimer; disulfide-linked or monomer (edited version) or heterodimer of an alpha chain (AC B8XH01) and this beta chain (non-edited version). In terms of tissue distribution, expressed by the venom gland.

The protein localises to the secreted. In terms of biological role, the homodimer inhibits HMG-CoA reductase (HMGCR) (32% of inhibition produced by 0.6 uM), a glycoprotein involved in the control of cholesterol biosynthesis. The inhibitory effects of bumarsin are seen at much lower concentrations (0.6 uM) than that for statins such as atorvastatin (5 mM) and simvastatin (10 uM). In addition to inhibition of HMG-CoA reductase, this protein lowers cholesterol levels by inducing steroid hormone synthesis via StAR, and by increasing reverse cholesterol transport mediated by the induction of ABCA1 and APOA1. Functionally, the heterodimer non-edited LVP1 induces lipolysis in rat adipocytes. Induction of lipolysis by LVP1 appears to be mediated through the beta-2 adrenergic receptor pathway (ADRB2). The monomer edited version, similar to alpha-toxins, may modulate voltage-gated sodium channels (Nav) and may block voltage-gated potassium channels (Kv). The protein is Lipolysis-activating peptide 1-beta chain of Buthus israelis (Israeli scorpion).